Reading from the N-terminus, the 485-residue chain is ATP synthase subunit beta (485 aa).

Residue 158–165 coordinates ATP; it reads GGAGVGKT.

It belongs to the ATPase alpha/beta chains family. As to quaternary structure, F-type ATPases have 2 components, CF(1) - the catalytic core - and CF(0) - the membrane proton channel. CF(1) has five subunits: alpha(3), beta(3), gamma(1), delta(1), epsilon(1). CF(0) has four main subunits: a(1), b(1), b'(1) and c(9-12).

The protein resides in the cell inner membrane. It carries out the reaction ATP + H2O + 4 H(+)(in) = ADP + phosphate + 5 H(+)(out). In terms of biological role, produces ATP from ADP in the presence of a proton gradient across the membrane. The catalytic sites are hosted primarily by the beta subunits. The chain is ATP synthase subunit beta from Erythrobacter litoralis (strain HTCC2594).